The following is a 127-amino-acid chain: Fluoride-specific ion channel FluC (127 aa).

Transmembrane regions (helical) follow at residues 4–24 (LLLAVFIGGGTGSVARWLLSM), 35–55 (LGTLTANLIGAFIIGIGFAWF), 71–91 (TGFCGGLTTFSTFSAEVVFLL), and 103–123 (VFVNLLGSFAMTALAFWLFSA). Na(+) contacts are provided by Gly-75 and Thr-78.

Belongs to the fluoride channel Fluc/FEX (TC 1.A.43) family.

Its subcellular location is the cell inner membrane. It carries out the reaction fluoride(in) = fluoride(out). Its activity is regulated as follows. Na(+) is not transported, but it plays an essential structural role and its presence is essential for fluoride channel function. In terms of biological role, fluoride-specific ion channel. Important for reducing fluoride concentration in the cell, thus reducing its toxicity. The chain is Fluoride-specific ion channel FluC from Escherichia coli (strain K12 / MC4100 / BW2952).